The chain runs to 438 residues: tRNA modification GTPase MnmE (438 aa).

(6S)-5-formyl-5,6,7,8-tetrahydrofolate contacts are provided by Arg21, Glu79, and Lys118. The TrmE-type G domain maps to 215 to 362 (GFSIVLIGAP…LEARIEQIVR (148 aa)). Asn225 lines the K(+) pocket. GTP is bound by residues 225-230 (NAGKSS), 244-250 (TDIPGTT), and 269-272 (DTAG). Mg(2+) is bound at residue Ser229. Residues Thr244, Ile246, and Thr249 each coordinate K(+). Mg(2+) is bound at residue Thr250. A (6S)-5-formyl-5,6,7,8-tetrahydrofolate-binding site is contributed by Lys438.

This sequence belongs to the TRAFAC class TrmE-Era-EngA-EngB-Septin-like GTPase superfamily. TrmE GTPase family. In terms of assembly, homodimer. Heterotetramer of two MnmE and two MnmG subunits. The cofactor is K(+).

The protein resides in the cytoplasm. Exhibits a very high intrinsic GTPase hydrolysis rate. Involved in the addition of a carboxymethylaminomethyl (cmnm) group at the wobble position (U34) of certain tRNAs, forming tRNA-cmnm(5)s(2)U34. This Maricaulis maris (strain MCS10) (Caulobacter maris) protein is tRNA modification GTPase MnmE.